Reading from the N-terminus, the 445-residue chain is uncharacterized protein (445 aa).

A run of 8 helical transmembrane segments spans residues 16-36 (IVSL…AFLI), 52-72 (LLAS…GYLL), 98-118 (VHSL…AGGC), 168-188 (GLMF…LGIV), 219-239 (ASAL…VWLI), 243-263 (GWSV…GALG), 283-303 (LIAA…NEGS), and 366-386 (AAYP…VPLV). The interval 417-445 (AWPNGPRRPGPPGQPRRVRQGGTAITPPT) is disordered.

Belongs to the major facilitator superfamily.

It localises to the cell membrane. This is an uncharacterized protein from Mycobacterium tuberculosis (strain CDC 1551 / Oshkosh).